The sequence spans 461 residues: A-type ATP synthase subunit B (461 aa).

It belongs to the ATPase alpha/beta chains family. In terms of assembly, has multiple subunits with at least A(3), B(3), C, D, E, F, H, I and proteolipid K(x).

It localises to the cell membrane. In terms of biological role, component of the A-type ATP synthase that produces ATP from ADP in the presence of a proton gradient across the membrane. The B chain is a regulatory subunit. This is A-type ATP synthase subunit B from Nitrosopumilus maritimus (strain SCM1).